The sequence spans 185 residues: MISSNEFKTGLTIEVDNDVYTIIEFQHVKPGKGAAFVRTKLKNVKTGGITERKFNAGEKVPKAHVERREMQYLYKDGDHFVAMDNETYEQTSLTEAQIGDGVKYLKENMNLGILFFNGTVIGVDLPNTVILEVAHTEPGVRGDTATGGSKPATLETGAVVQVPFFVNEGEKLIIDTRTGNYVQRA.

This sequence belongs to the elongation factor P family.

Its subcellular location is the cytoplasm. It functions in the pathway protein biosynthesis; polypeptide chain elongation. Functionally, involved in peptide bond synthesis. Stimulates efficient translation and peptide-bond synthesis on native or reconstituted 70S ribosomes in vitro. Probably functions indirectly by altering the affinity of the ribosome for aminoacyl-tRNA, thus increasing their reactivity as acceptors for peptidyl transferase. The polypeptide is Elongation factor P (Desulfitobacterium hafniense (strain Y51)).